Consider the following 475-residue polypeptide: Ribulose bisphosphate carboxylase large chain (475 aa).

The propeptide occupies 1-2; that stretch reads MS. Pro-3 bears the N-acetylproline mark. N6,N6,N6-trimethyllysine is present on Lys-14. Positions 123 and 173 each coordinate substrate. Lys-175 acts as the Proton acceptor in catalysis. Lys-177 contacts substrate. Mg(2+) contacts are provided by Lys-201, Asp-203, and Glu-204. Lys-201 carries the N6-carboxylysine modification. The active-site Proton acceptor is the His-294. Arg-295, His-327, and Ser-379 together coordinate substrate.

The protein belongs to the RuBisCO large chain family. Type I subfamily. In terms of assembly, heterohexadecamer of 8 large chains and 8 small chains. Requires Mg(2+) as cofactor.

The protein localises to the plastid. It carries out the reaction 2 (2R)-3-phosphoglycerate + 2 H(+) = D-ribulose 1,5-bisphosphate + CO2 + H2O. The enzyme catalyses D-ribulose 1,5-bisphosphate + O2 = 2-phosphoglycolate + (2R)-3-phosphoglycerate + 2 H(+). RuBisCO catalyzes two reactions: the carboxylation of D-ribulose 1,5-bisphosphate, the primary event in carbon dioxide fixation, as well as the oxidative fragmentation of the pentose substrate in the photorespiration process. Both reactions occur simultaneously and in competition at the same active site. The sequence is that of Ribulose bisphosphate carboxylase large chain from Aneura mirabilis (Parasitic liverwort).